The sequence spans 381 residues: Chymosin (381 aa).

A signal peptide spans 1-16; that stretch reads MRCLVVLLAVFALSQG. Positions 17–58 are cleaved as a propeptide — activation peptide; sequence AEITRIPLYKGKSLRKALKEHGLLEDFLQKQQYGISSKYSGF. The Peptidase A1 domain maps to 74-378; sequence YFGKIYLGTP…DRANNLVGLA (305 aa). Aspartate 92 is a catalytic residue. 2 cysteine pairs are disulfide-bonded: cysteine 105/cysteine 110 and cysteine 265/cysteine 269. The active site involves aspartate 274. A disulfide bond links cysteine 308 and cysteine 341.

The protein belongs to the peptidase A1 family. As to quaternary structure, monomer.

The catalysed reaction is Broad specificity similar to that of pepsin A. Clots milk by cleavage of a single 104-Ser-Phe-|-Met-Ala-107 bond in kappa-chain of casein.. Its function is as follows. Chymosin is synthesized in the mucosa of the abomasum (fourth stomach) of young (unweaned) ruminants. The enzyme hydrolyzes casein to paracasein. The polypeptide is Chymosin (CYM) (Bos taurus (Bovine)).